We begin with the raw amino-acid sequence, 408 residues long: Broad specificity amino-acid racemase (408 aa).

Residues 1-21 (MHKKTLLATLILGLLAGQAVA) form the signal peptide. A disulfide bond links Cys-70 and Cys-96. Lys-74 serves as the catalytic Proton acceptor. Lys-74 is subject to N6-(pyridoxal phosphate)lysine. Residue Arg-173 participates in substrate binding. Residue Tyr-300 is the Proton acceptor of the active site. Met-348 contributes to the substrate binding site.

This sequence belongs to the alanine racemase family. Bsr subfamily. Homodimer. Requires pyridoxal 5'-phosphate as cofactor.

The protein resides in the periplasm. The enzyme catalyses an L-alpha-amino acid = a D-alpha-amino acid. It catalyses the reaction L-lysine = D-lysine. The catalysed reaction is L-arginine = D-arginine. It carries out the reaction L-alanine = D-alanine. The enzyme catalyses L-serine = D-serine. It catalyses the reaction L-methionine = D-methionine. The catalysed reaction is L-leucine = D-leucine. It carries out the reaction L-cysteine = D-cysteine. The enzyme catalyses L-glutamine = D-glutamine. It catalyses the reaction L-asparagine = D-asparagine. The catalysed reaction is L-histidine = D-histidine. Functionally, amino-acid racemase able to utilize a broad range of substrates. Reversibly racemizes ten of the 19 natural chiral amino acids known, including both non-beta-branched aliphatic amino acids (Ala, Leu, Met, Ser, Cys, Gln and Asn) and positively charged amino acids (His, Lys and Arg). Is not active on negatively charged (Glu and Asp) or aromatic (Tyr, Trp and Phe) amino acids and displays minimal activity towards beta-branched aliphatic (Ile, Val and Thr) substrates. Enables bacteria to produce and release extracellular non-canonical D-amino acids (NCDAAs) that regulate diverse cellular processes. The chain is Broad specificity amino-acid racemase from Aeromonas hydrophila subsp. hydrophila (strain ATCC 7966 / DSM 30187 / BCRC 13018 / CCUG 14551 / JCM 1027 / KCTC 2358 / NCIMB 9240 / NCTC 8049).